The chain runs to 315 residues: tRNA pseudouridine synthase B (315 aa).

D47 acts as the Nucleophile in catalysis.

Belongs to the pseudouridine synthase TruB family. Type 1 subfamily.

The catalysed reaction is uridine(55) in tRNA = pseudouridine(55) in tRNA. Responsible for synthesis of pseudouridine from uracil-55 in the psi GC loop of transfer RNAs. The polypeptide is tRNA pseudouridine synthase B (Shewanella amazonensis (strain ATCC BAA-1098 / SB2B)).